The primary structure comprises 305 residues: uncharacterized protein (305 aa).

An ABC transporter domain is found at 5–233 (LELKNVTKNI…ENDTYFFQVE (229 aa)). 37–44 (GPNGAGKT) is an ATP binding site.

This sequence belongs to the ABC transporter superfamily.

This is an uncharacterized protein from Bacillus subtilis (strain 168).